The chain runs to 504 residues: tRNA (uracil-5-)-methyltransferase homolog B (504 aa).

A mitochondrion-targeting transit peptide spans 1–16; the sequence is MAGLKRRVPLHSLRYF. S-adenosyl-L-methionine is bound by residues Q323, E373, and N423. C451 acts as the Nucleophile in catalysis. Catalysis depends on E497, which acts as the Proton acceptor.

This sequence belongs to the class I-like SAM-binding methyltransferase superfamily. RNA M5U methyltransferase family.

The protein resides in the mitochondrion. It localises to the mitochondrion matrix. It carries out the reaction uridine(54) in tRNA + S-adenosyl-L-methionine = 5-methyluridine(54) in tRNA + S-adenosyl-L-homocysteine + H(+). It catalyses the reaction a uridine in 12S rRNA + S-adenosyl-L-methionine = a 5-methyluridine in 12S rRNA + S-adenosyl-L-homocysteine + H(+). Its function is as follows. Mitochondrial S-adenosyl-L-methionine-dependent methyltransferase that catalyzes the formation of 5-methyl-uridine in tRNAs and 12S rRNA. Catalyzes the methylation of uridine at position 54 (m5U54) in all tRNAs. Specifically methylates the uridine in position 429 of 12S rRNA (m5U429). Does not affect RNA stability or mitochondrial translation. This Homo sapiens (Human) protein is tRNA (uracil-5-)-methyltransferase homolog B.